The following is a 293-amino-acid chain: ATP synthase gamma chain (293 aa).

The protein belongs to the ATPase gamma chain family. In terms of assembly, F-type ATPases have 2 components, CF(1) - the catalytic core - and CF(0) - the membrane proton channel. CF(1) has five subunits: alpha(3), beta(3), gamma(1), delta(1), epsilon(1). CF(0) has three main subunits: a, b and c.

The protein localises to the cell inner membrane. Functionally, produces ATP from ADP in the presence of a proton gradient across the membrane. The gamma chain is believed to be important in regulating ATPase activity and the flow of protons through the CF(0) complex. This Gluconacetobacter diazotrophicus (strain ATCC 49037 / DSM 5601 / CCUG 37298 / CIP 103539 / LMG 7603 / PAl5) protein is ATP synthase gamma chain.